We begin with the raw amino-acid sequence, 201 residues long: Holliday junction branch migration complex subunit RuvA (201 aa).

A domain I region spans residues Met-1–Thr-64. The tract at residues Thr-65–Glu-143 is domain II. The flexible linker stretch occupies residues Leu-144 to Ser-152. Positions Asp-153–Arg-201 are domain III.

This sequence belongs to the RuvA family. In terms of assembly, homotetramer. Forms an RuvA(8)-RuvB(12)-Holliday junction (HJ) complex. HJ DNA is sandwiched between 2 RuvA tetramers; dsDNA enters through RuvA and exits via RuvB. An RuvB hexamer assembles on each DNA strand where it exits the tetramer. Each RuvB hexamer is contacted by two RuvA subunits (via domain III) on 2 adjacent RuvB subunits; this complex drives branch migration. In the full resolvosome a probable DNA-RuvA(4)-RuvB(12)-RuvC(2) complex forms which resolves the HJ.

Its subcellular location is the cytoplasm. Its function is as follows. The RuvA-RuvB-RuvC complex processes Holliday junction (HJ) DNA during genetic recombination and DNA repair, while the RuvA-RuvB complex plays an important role in the rescue of blocked DNA replication forks via replication fork reversal (RFR). RuvA specifically binds to HJ cruciform DNA, conferring on it an open structure. The RuvB hexamer acts as an ATP-dependent pump, pulling dsDNA into and through the RuvAB complex. HJ branch migration allows RuvC to scan DNA until it finds its consensus sequence, where it cleaves and resolves the cruciform DNA. The sequence is that of Holliday junction branch migration complex subunit RuvA from Clostridium perfringens (strain ATCC 13124 / DSM 756 / JCM 1290 / NCIMB 6125 / NCTC 8237 / Type A).